The sequence spans 344 residues: Dihydroorotase (344 aa).

Positions 13 and 15 each coordinate Zn(2+). Substrate is bound by residues 15–17 (HLR) and N41. 3 residues coordinate Zn(2+): K98, H135, and H173. K98 is subject to N6-carboxylysine. H135 is a substrate binding site. L218 contacts substrate. D247 is a binding site for Zn(2+). The active site involves D247. Residues H251 and A263 each contribute to the substrate site.

This sequence belongs to the metallo-dependent hydrolases superfamily. DHOase family. Class II DHOase subfamily. As to quaternary structure, homodimer. Zn(2+) serves as cofactor.

The enzyme catalyses (S)-dihydroorotate + H2O = N-carbamoyl-L-aspartate + H(+). It functions in the pathway pyrimidine metabolism; UMP biosynthesis via de novo pathway; (S)-dihydroorotate from bicarbonate: step 3/3. Functionally, catalyzes the reversible cyclization of carbamoyl aspartate to dihydroorotate. The sequence is that of Dihydroorotase from Neisseria meningitidis serogroup B (strain ATCC BAA-335 / MC58).